A 560-amino-acid chain; its full sequence is Dihydroxy-acid dehydratase (560 aa).

Cys-52 is a [2Fe-2S] cluster binding site. Asp-84 contacts Mg(2+). Cys-125 is a [2Fe-2S] cluster binding site. Residues Asp-126 and Lys-127 each coordinate Mg(2+). An N6-carboxylysine modification is found at Lys-127. Cys-197 contributes to the [2Fe-2S] cluster binding site. Residue Glu-449 coordinates Mg(2+). Ser-475 serves as the catalytic Proton acceptor.

The protein belongs to the IlvD/Edd family. As to quaternary structure, homodimer. [2Fe-2S] cluster is required as a cofactor. Mg(2+) serves as cofactor.

The enzyme catalyses (2R)-2,3-dihydroxy-3-methylbutanoate = 3-methyl-2-oxobutanoate + H2O. It catalyses the reaction (2R,3R)-2,3-dihydroxy-3-methylpentanoate = (S)-3-methyl-2-oxopentanoate + H2O. The protein operates within amino-acid biosynthesis; L-isoleucine biosynthesis; L-isoleucine from 2-oxobutanoate: step 3/4. It participates in amino-acid biosynthesis; L-valine biosynthesis; L-valine from pyruvate: step 3/4. Functionally, functions in the biosynthesis of branched-chain amino acids. Catalyzes the dehydration of (2R,3R)-2,3-dihydroxy-3-methylpentanoate (2,3-dihydroxy-3-methylvalerate) into 2-oxo-3-methylpentanoate (2-oxo-3-methylvalerate) and of (2R)-2,3-dihydroxy-3-methylbutanoate (2,3-dihydroxyisovalerate) into 2-oxo-3-methylbutanoate (2-oxoisovalerate), the penultimate precursor to L-isoleucine and L-valine, respectively. The protein is Dihydroxy-acid dehydratase of Sulfurisphaera tokodaii (strain DSM 16993 / JCM 10545 / NBRC 100140 / 7) (Sulfolobus tokodaii).